Here is a 163-residue protein sequence, read N- to C-terminus: NADPH-dependent 7-cyano-7-deazaguanine reductase (163 aa).

Cysteine 54 acts as the Thioimide intermediate in catalysis. Aspartate 61 (proton donor) is an active-site residue. Residues valine 76–serine 78 and histidine 95–glutamate 96 each bind substrate.

Belongs to the GTP cyclohydrolase I family. QueF type 1 subfamily.

The protein resides in the cytoplasm. The enzyme catalyses 7-aminomethyl-7-carbaguanine + 2 NADP(+) = 7-cyano-7-deazaguanine + 2 NADPH + 3 H(+). It functions in the pathway tRNA modification; tRNA-queuosine biosynthesis. Functionally, catalyzes the NADPH-dependent reduction of 7-cyano-7-deazaguanine (preQ0) to 7-aminomethyl-7-deazaguanine (preQ1). This chain is NADPH-dependent 7-cyano-7-deazaguanine reductase, found in Streptococcus thermophilus (strain CNRZ 1066).